We begin with the raw amino-acid sequence, 224 residues long: uncharacterized protein (224 aa).

Positions 203 to 224 are disordered; that stretch reads ELKKKKKKKIKKPKEIRNQKNV. Residues 204 to 214 are compositionally biased toward basic residues; it reads LKKKKKKKIKK. Over residues 215–224 the composition is skewed to basic and acidic residues; it reads PKEIRNQKNV.

This is an uncharacterized protein from Mycoplasma genitalium (strain ATCC 33530 / DSM 19775 / NCTC 10195 / G37) (Mycoplasmoides genitalium).